Consider the following 885-residue polypeptide: Isoleucine--tRNA ligase (885 aa).

The 'HIGH' region motif lies at 59–69 (PYANGDLHIGH). Glutamate 550 contributes to the L-isoleucyl-5'-AMP binding site. A 'KMSKS' region motif is present at residues 591 to 595 (KMSKS). Lysine 594 is an ATP binding site. Zn(2+) is bound by residues cysteine 861, cysteine 864, cysteine 877, and cysteine 880.

Belongs to the class-I aminoacyl-tRNA synthetase family. IleS type 1 subfamily. In terms of assembly, monomer. It depends on Zn(2+) as a cofactor.

It is found in the cytoplasm. It carries out the reaction tRNA(Ile) + L-isoleucine + ATP = L-isoleucyl-tRNA(Ile) + AMP + diphosphate. Functionally, catalyzes the attachment of isoleucine to tRNA(Ile). As IleRS can inadvertently accommodate and process structurally similar amino acids such as valine, to avoid such errors it has two additional distinct tRNA(Ile)-dependent editing activities. One activity is designated as 'pretransfer' editing and involves the hydrolysis of activated Val-AMP. The other activity is designated 'posttransfer' editing and involves deacylation of mischarged Val-tRNA(Ile). The polypeptide is Isoleucine--tRNA ligase (Mycoplasma mobile (strain ATCC 43663 / 163K / NCTC 11711) (Mesomycoplasma mobile)).